The primary structure comprises 298 residues: ATP synthase gamma chain (298 aa).

Belongs to the ATPase gamma chain family. In terms of assembly, F-type ATPases have 2 components, CF(1) - the catalytic core - and CF(0) - the membrane proton channel. CF(1) has five subunits: alpha(3), beta(3), gamma(1), delta(1), epsilon(1). CF(0) has three main subunits: a, b and c.

It localises to the cell inner membrane. In terms of biological role, produces ATP from ADP in the presence of a proton gradient across the membrane. The gamma chain is believed to be important in regulating ATPase activity and the flow of protons through the CF(0) complex. This is ATP synthase gamma chain from Wolinella succinogenes (strain ATCC 29543 / DSM 1740 / CCUG 13145 / JCM 31913 / LMG 7466 / NCTC 11488 / FDC 602W) (Vibrio succinogenes).